The chain runs to 493 residues: ATP synthase subunit beta, chloroplastic (493 aa).

170–177 provides a ligand contact to ATP; the sequence is GGAGVGKT.

This sequence belongs to the ATPase alpha/beta chains family. As to quaternary structure, F-type ATPases have 2 components, CF(1) - the catalytic core - and CF(0) - the membrane proton channel. CF(1) has five subunits: alpha(3), beta(3), gamma(1), delta(1), epsilon(1). CF(0) has four main subunits: a(1), b(1), b'(1) and c(9-12).

The protein localises to the plastid. Its subcellular location is the chloroplast thylakoid membrane. The enzyme catalyses ATP + H2O + 4 H(+)(in) = ADP + phosphate + 5 H(+)(out). Functionally, produces ATP from ADP in the presence of a proton gradient across the membrane. The catalytic sites are hosted primarily by the beta subunits. The sequence is that of ATP synthase subunit beta, chloroplastic from Chaetosphaeridium globosum (Charophycean green alga).